The primary structure comprises 447 residues: UDP-glycosyltransferase 79B9 (447 aa).

Residues S260, 319-321 (VQQ), 336-344 (HCGFGSMWE), and 358-361 (LCDQ) each bind UDP-alpha-D-glucose.

This sequence belongs to the UDP-glycosyltransferase family.

The polypeptide is UDP-glycosyltransferase 79B9 (UGT79B9) (Arabidopsis thaliana (Mouse-ear cress)).